We begin with the raw amino-acid sequence, 92 residues long: Envelope glycoprotein J (92 aa).

Positions 1-21 are cleaved as a signal peptide; sequence MSLRAVWHLGLLGSLVGAVLA. At 22-49 the chain is on the extracellular side; the sequence is ATHRGPAANTTDPLTHAPVSPHPSPLGG. N-linked (GlcNAc...) asparagine; by host glycosylation occurs at Asn-30. The chain crosses the membrane as a helical span at residues 50–70; the sequence is FAVPLVVGGLCAVVLGAACLL. Residues 71–92 lie on the Cytoplasmic side of the membrane; sequence ELLRRTCRGWGRYHPYMDPVVV.

It belongs to the alphaherpesvirinae glycoprotein J family.

Its subcellular location is the host Golgi apparatus membrane. The protein localises to the host endoplasmic reticulum membrane. It localises to the host endosome membrane. Its function is as follows. Inhibits host cell apoptosis. Induces an increase in reactive oxygen species (ROS) in the host cell. The chain is Envelope glycoprotein J (gJ) from Homo sapiens (Human).